The primary structure comprises 294 residues: uncharacterized protein (294 aa).

Active-site charge relay system residues include Thr43 and Tyr104. Tyr130 serves as the catalytic Proton donor. Residue Lys158 is the Schiff-base intermediate with substrate of the active site.

This sequence belongs to the DapA family. In terms of assembly, homotetramer.

It is found in the cytoplasm. This is an uncharacterized protein from Pyrococcus abyssi (strain GE5 / Orsay).